Here is a 535-residue protein sequence, read N- to C-terminus: GMP synthase [glutamine-hydrolyzing] (535 aa).

The region spanning 4–210 is the Glutamine amidotransferase type-1 domain; that stretch reads KILILDFGSQ…VHEICKCKPD (207 aa). Residue Cys-85 is the Nucleophile of the active site. Active-site residues include His-184 and Glu-186. The region spanning 211–403 is the GMPS ATP-PPase domain; the sequence is WVMGDYIAEA…LGLPREMVYR (193 aa). 238–244 contributes to the ATP binding site; sequence SGGVDSS.

In terms of assembly, homodimer.

It catalyses the reaction XMP + L-glutamine + ATP + H2O = GMP + L-glutamate + AMP + diphosphate + 2 H(+). Its pathway is purine metabolism; GMP biosynthesis; GMP from XMP (L-Gln route): step 1/1. Its function is as follows. Catalyzes the synthesis of GMP from XMP. This chain is GMP synthase [glutamine-hydrolyzing], found in Polynucleobacter necessarius subsp. necessarius (strain STIR1).